A 371-amino-acid chain; its full sequence is GTPase Obg (371 aa).

Residues 1–159 enclose the Obg domain; sequence MKFVDEAYID…KNLKLELKVL (159 aa). Residues 160–334 enclose the OBG-type G domain; the sequence is ADVGLLGMPN…LIRTIYKHVH (175 aa). GTP contacts are provided by residues 166-173, 191-195, 213-216, 284-287, and 315-317; these read GMPNAGKS, FTTLH, DIPG, NKLD, and SAL. Mg(2+) is bound by residues serine 173 and threonine 193.

It belongs to the TRAFAC class OBG-HflX-like GTPase superfamily. OBG GTPase family. As to quaternary structure, monomer. Mg(2+) is required as a cofactor.

The protein resides in the cytoplasm. Functionally, an essential GTPase which binds GTP, GDP and possibly (p)ppGpp with moderate affinity, with high nucleotide exchange rates and a fairly low GTP hydrolysis rate. Plays a role in control of the cell cycle, stress response, ribosome biogenesis and in those bacteria that undergo differentiation, in morphogenesis control. This chain is GTPase Obg, found in Delftia acidovorans (strain DSM 14801 / SPH-1).